The chain runs to 424 residues: Attachment protein G3P (424 aa).

An N-terminal signal peptide occupies residues 1 to 18 (MKKLLFAIPLVVPFYSHS). Positions 19-85 (AETVESCLAK…VPIGLAIPEN (67 aa)) are N1. Disulfide bonds link cysteine 25/cysteine 54 and cysteine 64/cysteine 71. The segment at 83-147 (PENEGGGSEG…NPNPSLEESQ (65 aa)) is disordered. The tract at residues 86–104 (EGGGSEGGGSEGGGSEGGG) is G1 (Gly-rich linker). Gly residues predominate over residues 86 to 105 (EGGGSEGGGSEGGGSEGGGT). The segment at 105-141 (TKPPEYGDTPIPGYTYINPLDGTYPPGTEQNPANPNP) is hinge. A compositionally biased stretch (polar residues) spans 132-147 (TEQNPANPNPSLEESQ). The segment at 142-228 (SLEESQPLNT…CEYQGQSSDL (87 aa)) is N2. Cysteine 206 and cysteine 219 are joined by a disulfide. Residues 222–279 (QGQSSDLPQPPVNAGGGSGGGSGGGSEGGGSEGGGSEGGGSEGGGSGGGSGSGDFDYE) are disordered. Residues 235–273 (AGGGSGGGSGGGSEGGGSEGGGSEGGGSEGGGSGGGSGS) are compositionally biased toward gly residues. Positions 236-274 (GGGSGGGSGGGSEGGGSEGGGSEGGGSEGGGSGGGSGSG) are G2 (Gly-rich linker). The segment at 253–262 (EGGGSEGGGS) is not essential for gene 3 function. The interval 275-424 (DFDYEKMANA…FANILRNKES (150 aa)) is CT. The chain crosses the membrane as a helical span at residues 398 to 418 (VFAFLLYVATFMYVFSTFANI).

Belongs to the inovirus G3P protein family. In terms of assembly, interacts with G6P; this interaction is required for proper integration of G3P and G6P into the virion. Interacts with G8P. Interacts with the tip of the host pilus. Interacts (via N-terminus) with host TolA. Interacts (via transmembrane domain) with host TolQ (via 2nd and 3rd transmembrane domains); this interaction allows the phage translocation across the host inner membrane. Interacts (via transmembrane domain) with host TolR (via transmembrane domain); this interaction allows the phage translocation across the host inner membrane. In one of the crystallographic structures Trp-39 is oxidized to 1',2'-dihydro-2'-oxotryptophan.

Its subcellular location is the virion. It localises to the host membrane. Its function is as follows. Plays essential roles both in the penetration of the viral genome into the bacterial host via pilus retraction and in the extrusion process. During the initial step of infection, G3P mediates adsorption of the phage to its primary receptor, the tip of host F-pilus. Attachment of the phage causes pilus retraction bringing the viral particle into close proximity of the host cell inner membrane. Binding to the host pilus initiates a change in the G3P conformation, allowing subsequent interaction with the host entry receptors TolA, TolQ and TolR and penetration of the viral DNA into the host cytoplasm. In the extrusion process, G3P mediates the release of the membrane-anchored virion from the cell via its C-terminal domain. In Enterobacteria phage M13 (Bacteriophage M13), this protein is Attachment protein G3P (III).